Consider the following 830-residue polypeptide: MKVSRRKFIKAQAVASAAAAAGISIPISASNVVTDSSLTKITWEKAPCRFCGTGCSVNVGTKEGKVVATHGDIKSPVNRGLNCVKGYFLSKIMYGKDRLTQPLLRMTDGKFDKNGEFSPISWDQAFDIMAEKWKKTLKEKGPEAIGMFGSGQWTIYDGYAASKLMKAGFRSNNLEPNARHCMASAVVGFIRTFGIDEPMGCYDDIEAADAFVLWGSNMVEMHPILWTRVTDRRLSVPGVKVSVLSTFEHRSFELADIPIIFTPQSDLAILNFIANYIITNDKVNKDFTSKHVNFRRGTTDIGYGLRPEHPLQQAAKNPDSGDSTPMTFEEFKAFVSEYTVEKASEISGVKPDKLIELAELYANPETKVVSFWTMGFNQHTRGVWCNNLVYNIHLLTGKISTPGNSPFSLTGQPSACGTAREVGTFAHRLPADLVVTNPEHRKIAEKIWKLPDGTIPGKVGAHAVLQSRMLKDGKINAYWIQVNNNLQAGANINEETLPGYRNPDNFIVVSEAYPTVTSQAADLVLPTAMWVEKEGGFGNAERRTQLWHQMVEAPGESKPDLWQLMEFSKRFKTDEVWPKELLDSNPDYKGKTLFDVLFINGNVNKYPLDDLAEGTLNDESNYYGFYVHKGLFEEYAEFGRGHGHDLAPFDMYHETRGLRWPVVDGKETLWRYREGSDPYVKEGAGFEFYGKPDGKAIIFALPYEPAAESPDEEYDMWLSTGRVIEHWHSGSMTQRVPELYKAYPDAQVFMHPDDAKSRGLRRGDAVKVMSRRGEIITRVETRGRNKPPIGLVFVPWFDASQLINKVTLDATDPLSKQTDFKKCAVKIVKA.

Residues 1-31 (MKVSRRKFIKAQAVASAAAAAGISIPISASN) constitute a signal peptide (tat-type signal). Positions 41–97 (ITWEKAPCRFCGTGCSVNVGTKEGKVVATHGDIKSPVNRGLNCVKGYFLSKIMYGKD) constitute a 4Fe-4S Mo/W bis-MGD-type domain. [4Fe-4S] cluster is bound by residues C48, C51, C55, and C83. Mo-bis(molybdopterin guanine dinucleotide) is bound by residues K85, Q152, N177, C181, 245-249 (STFEH), 264-266 (QSD), M374, Q378, N484, 510-511 (SE), K533, D560, and 720-729 (TGRVIEHWHS). W796 is a substrate binding site. Mo-bis(molybdopterin guanine dinucleotide)-binding residues include N804 and K821.

It belongs to the prokaryotic molybdopterin-containing oxidoreductase family. NasA/NapA/NarB subfamily. In terms of assembly, component of the periplasmic nitrate reductase NapAB complex composed of NapA and NapB. It depends on [4Fe-4S] cluster as a cofactor. Mo-bis(molybdopterin guanine dinucleotide) is required as a cofactor. Predicted to be exported by the Tat system. The position of the signal peptide cleavage has not been experimentally proven.

It localises to the periplasm. The catalysed reaction is 2 Fe(II)-[cytochrome] + nitrate + 2 H(+) = 2 Fe(III)-[cytochrome] + nitrite + H2O. Functionally, catalytic subunit of the periplasmic nitrate reductase complex NapAB. Receives electrons from NapB and catalyzes the reduction of nitrate to nitrite. The protein is Periplasmic nitrate reductase 2 of Photobacterium profundum (strain SS9).